Consider the following 192-residue polypeptide: uncharacterized protein (192 aa).

A helical; Signal-anchor membrane pass occupies residues 7-29 (FIHSISGGSSLLSASEVFASAFF). Residues 51-67 (YFLCVLVSTFLNSLVII) form a helical membrane-spanning segment.

Its subcellular location is the membrane. This is an uncharacterized protein from Saccharomyces cerevisiae (strain ATCC 204508 / S288c) (Baker's yeast).